The following is a 379-amino-acid chain: UDP-4-amino-4-deoxy-L-arabinose--oxoglutarate aminotransferase (379 aa).

At K182 the chain carries N6-(pyridoxal phosphate)lysine.

The protein belongs to the DegT/DnrJ/EryC1 family. ArnB subfamily. In terms of assembly, homodimer. It depends on pyridoxal 5'-phosphate as a cofactor.

It catalyses the reaction UDP-4-amino-4-deoxy-beta-L-arabinose + 2-oxoglutarate = UDP-beta-L-threo-pentopyranos-4-ulose + L-glutamate. Its pathway is nucleotide-sugar biosynthesis; UDP-4-deoxy-4-formamido-beta-L-arabinose biosynthesis; UDP-4-deoxy-4-formamido-beta-L-arabinose from UDP-alpha-D-glucuronate: step 2/3. It functions in the pathway bacterial outer membrane biogenesis; lipopolysaccharide biosynthesis. Functionally, catalyzes the conversion of UDP-4-keto-arabinose (UDP-Ara4O) to UDP-4-amino-4-deoxy-L-arabinose (UDP-L-Ara4N). The modified arabinose is attached to lipid A and is required for resistance to polymyxin and cationic antimicrobial peptides. In Salmonella agona (strain SL483), this protein is UDP-4-amino-4-deoxy-L-arabinose--oxoglutarate aminotransferase.